We begin with the raw amino-acid sequence, 156 residues long: Transcription factor MafK (156 aa).

Residues 1–21 (MTTNPKPNKALKVKEESGENA) are disordered. A basic motif region spans residues 51-76 (RLKQRRRTLKNRGYAASCRIKRVTQK). Residues 51–114 (RLKQRRRTLK…DALRSKYEAL (64 aa)) enclose the bZIP domain. The leucine-zipper stretch occupies residues 79 to 93 (LERQRVELQQEVEKL).

The protein belongs to the bZIP family. Maf subfamily. As to quaternary structure, homodimer or heterodimer.

It localises to the nucleus. Functionally, since they lack a putative transactivation domain, the small Mafs behave as transcriptional repressors when they dimerize among themselves. However, they act as transcriptional activators by dimerizing with other (usually larger) basic-zipper proteins and recruiting them to specific DNA-binding sites. Small Maf proteins heterodimerize with Fos and may act as competitive repressors of the NF-E2 transcription factor. In Gallus gallus (Chicken), this protein is Transcription factor MafK (MAFK).